We begin with the raw amino-acid sequence, 425 residues long: UPF0597 protein VF_0641 (425 aa).

It belongs to the UPF0597 family.

This Aliivibrio fischeri (strain ATCC 700601 / ES114) (Vibrio fischeri) protein is UPF0597 protein VF_0641.